Here is a 258-residue protein sequence, read N- to C-terminus: Acyl-[acyl-carrier-protein]--UDP-N-acetylglucosamine O-acyltransferase (258 aa).

The protein belongs to the transferase hexapeptide repeat family. LpxA subfamily. As to quaternary structure, homotrimer.

It is found in the cytoplasm. The catalysed reaction is a (3R)-hydroxyacyl-[ACP] + UDP-N-acetyl-alpha-D-glucosamine = a UDP-3-O-[(3R)-3-hydroxyacyl]-N-acetyl-alpha-D-glucosamine + holo-[ACP]. It functions in the pathway glycolipid biosynthesis; lipid IV(A) biosynthesis; lipid IV(A) from (3R)-3-hydroxytetradecanoyl-[acyl-carrier-protein] and UDP-N-acetyl-alpha-D-glucosamine: step 1/6. Functionally, involved in the biosynthesis of lipid A, a phosphorylated glycolipid that anchors the lipopolysaccharide to the outer membrane of the cell. This chain is Acyl-[acyl-carrier-protein]--UDP-N-acetylglucosamine O-acyltransferase, found in Azotobacter vinelandii (strain DJ / ATCC BAA-1303).